The following is a 308-amino-acid chain: C-4 methylsterol oxidase (308 aa).

The chain crosses the membrane as a helical span at residues 56–76 (LLFFLTHEIFYFGRCLPWAII). The Fatty acid hydroxylase domain maps to 145-282 (WAVFFVLEDT…FRWWDFILDT (138 aa)). The Histidine box-1 signature appears at 160–164 (HRGLH). A Histidine box-2 motif is present at residues 173–177 (HKQHH). A Histidine box-3 motif is present at residues 257-263 (HHDEHHH).

Belongs to the sterol desaturase family. Fe cation serves as cofactor.

The protein resides in the endoplasmic reticulum membrane. It catalyses the reaction 4,4-dimethyl-5alpha-cholest-7-en-3beta-ol + 6 Fe(II)-[cytochrome b5] + 3 O2 + 5 H(+) = 4alpha-carboxy-4beta-methyl-5alpha-cholest-7-ene-3beta-ol + 6 Fe(III)-[cytochrome b5] + 4 H2O. The protein operates within steroid biosynthesis; zymosterol biosynthesis; zymosterol from lanosterol: step 3/6. Functionally, C-4 methylsterol oxidase; part of the third module of ergosterol biosynthesis pathway that includes the late steps of the pathway. ERG25 is a catalytic component of the C-4 demethylation complex that catalyzes the conversion of 4,4-dimethylfecosterol into fecosterol via 4-methylfecosterol. Catalyzes the three-step monooxygenation required for the demethylation of 4,4-dimethyl and 4alpha-methylsterols. The third module or late pathway involves the ergosterol synthesis itself through consecutive reactions that mainly occur in the endoplasmic reticulum (ER) membrane. Firstly, the squalene synthase ERG9 catalyzes the condensation of 2 farnesyl pyrophosphate moieties to form squalene, which is the precursor of all steroids. Squalene synthase is crucial for balancing the incorporation of farnesyl diphosphate (FPP) into sterol and nonsterol isoprene synthesis. Secondly, the squalene epoxidase ERG1 catalyzes the stereospecific oxidation of squalene to (S)-2,3-epoxysqualene, which is considered to be a rate-limiting enzyme in steroid biosynthesis. Then, the lanosterol synthase ERG7 catalyzes the cyclization of (S)-2,3 oxidosqualene to lanosterol, a reaction that forms the sterol core. In the next steps, lanosterol is transformed to zymosterol through a complex process involving various demethylation, reduction and desaturation reactions. The lanosterol 14-alpha-demethylase ERG11 (also known as CYP51) catalyzes C14-demethylation of lanosterol to produce 4,4'-dimethyl cholesta-8,14,24-triene-3-beta-ol, which is critical for ergosterol biosynthesis. The C-14 reductase ERG24 reduces the C14=C15 double bond of 4,4-dimethyl-cholesta-8,14,24-trienol to produce 4,4-dimethyl-cholesta-8,24-dienol. 4,4-dimethyl-cholesta-8,24-dienol is substrate of the C-4 demethylation complex ERG25-ERG26-ERG27 in which ERG25 catalyzes the three-step monooxygenation required for the demethylation of 4,4-dimethyl and 4alpha-methylsterols, ERG26 catalyzes the oxidative decarboxylation that results in a reduction of the 3-beta-hydroxy group at the C-3 carbon to an oxo group, and ERG27 is responsible for the reduction of the keto group on the C-3. ERG28 has a role as a scaffold to help anchor ERG25, ERG26 and ERG27 to the endoplasmic reticulum and ERG29 regulates the activity of the iron-containing C4-methylsterol oxidase ERG25. Then, the sterol 24-C-methyltransferase ERG6 catalyzes the methyl transfer from S-adenosyl-methionine to the C-24 of zymosterol to form fecosterol. The C-8 sterol isomerase ERG2 catalyzes the reaction which results in unsaturation at C-7 in the B ring of sterols and thus converts fecosterol to episterol. The sterol-C5-desaturase ERG3 then catalyzes the introduction of a C-5 double bond in the B ring to produce 5-dehydroepisterol. The C-22 sterol desaturase ERG5 further converts 5-dehydroepisterol into ergosta-5,7,22,24(28)-tetraen-3beta-ol by forming the C-22(23) double bond in the sterol side chain. Finally, ergosta-5,7,22,24(28)-tetraen-3beta-ol is substrate of the C-24(28) sterol reductase ERG4 to produce ergosterol. The polypeptide is C-4 methylsterol oxidase (Candida albicans (strain SC5314 / ATCC MYA-2876) (Yeast)).